A 304-amino-acid polypeptide reads, in one-letter code: MDSYGDTSGRIGRDWLDRHDEELEQELLDDELNLDELFGPEQEDAPGELSRRRYFRELFRLQRELVKLQNWVVHTGHKVVILFEGRDAAGKGGVIKRITQRLNPRVCRVAALPAPNDREQTQWYFQRYVSHLPAGGEIVLFDRSWYNRAGVERVMGFCNDEQYEEFFRSVPEFEKMLARSGIQLLKYWFSISDAEQHLRFLSRIHDPLKQWKLSPMDLESRRRWEAYTKAKETMLERTHIPEAPWWVVQADDKKRARLNCIHHLLQQMPYREVPQPPVHLPERLRHADYVRHPTPGEIIVPEVY.

Belongs to the polyphosphate kinase 2 (PPK2) family. Class I subfamily.

The enzyme catalyses [phosphate](n) + ATP = [phosphate](n+1) + ADP. Its function is as follows. Uses inorganic polyphosphate (polyP) as a donor to convert ADP to ATP. This chain is ADP-polyphosphate phosphotransferase, found in Pseudomonas aeruginosa (strain ATCC 15692 / DSM 22644 / CIP 104116 / JCM 14847 / LMG 12228 / 1C / PRS 101 / PAO1).